The primary structure comprises 102 residues: uncharacterized protein (102 aa).

Residues 36–55 traverse the membrane as a helical segment; the sequence is IISLLAIFIKMCLWLWKQFL.

The protein localises to the membrane. This is an uncharacterized protein from Homo sapiens (Human).